The primary structure comprises 85 residues: U4-theraphotoxin-Hhn1t (85 aa).

An N-terminal signal peptide occupies residues 1–22 (MKVTLIAILTCAAVLVLHTTAA). Residues 23–48 (EELEAESQLMEVGMPDTELAAVDEER) constitute a propeptide that is removed on maturation. 3 cysteine pairs are disulfide-bonded: Cys-52–Cys-66, Cys-56–Cys-77, and Cys-71–Cys-82.

Belongs to the neurotoxin 12 (Hwtx-2) family. 02 (Hwtx-2) subfamily. Expressed by the venom gland.

It is found in the secreted. In terms of biological role, postsynaptic neurotoxin. The protein is U4-theraphotoxin-Hhn1t of Cyriopagopus hainanus (Chinese bird spider).